The sequence spans 117 residues: uncharacterized protein (117 aa).

The interval 1 to 20 (METKKLIGKPLQPARPVRHL) is disordered.

This is an uncharacterized protein from Homo sapiens (Human).